Here is a 544-residue protein sequence, read N- to C-terminus: CTP synthase (544 aa).

The segment at 1–265 (MTKFIFVTGG…DNIITEQLQL (265 aa)) is amidoligase domain. Position 13 (Ser-13) interacts with CTP. Ser-13 lines the UTP pocket. ATP contacts are provided by residues 14 to 19 (SLGKGI) and Asp-71. Asp-71 and Glu-139 together coordinate Mg(2+). CTP contacts are provided by residues 146 to 148 (DIE), 186 to 191 (KTKPTQ), and Lys-222. UTP contacts are provided by residues 186-191 (KTKPTQ) and Lys-222. The 255-residue stretch at 290-544 (KIAMVGKYVD…VKAALNNKKA (255 aa)) folds into the Glutamine amidotransferase type-1 domain. Gly-353 contributes to the L-glutamine binding site. Residue Cys-380 is the Nucleophile; for glutamine hydrolysis of the active site. Residues 381–384 (LGMQ), Glu-404, and Arg-471 each bind L-glutamine. Active-site residues include His-517 and Glu-519.

This sequence belongs to the CTP synthase family. Homotetramer.

The enzyme catalyses UTP + L-glutamine + ATP + H2O = CTP + L-glutamate + ADP + phosphate + 2 H(+). It catalyses the reaction L-glutamine + H2O = L-glutamate + NH4(+). It carries out the reaction UTP + NH4(+) + ATP = CTP + ADP + phosphate + 2 H(+). It functions in the pathway pyrimidine metabolism; CTP biosynthesis via de novo pathway; CTP from UDP: step 2/2. Allosterically activated by GTP, when glutamine is the substrate; GTP has no effect on the reaction when ammonia is the substrate. The allosteric effector GTP functions by stabilizing the protein conformation that binds the tetrahedral intermediate(s) formed during glutamine hydrolysis. Inhibited by the product CTP, via allosteric rather than competitive inhibition. Catalyzes the ATP-dependent amination of UTP to CTP with either L-glutamine or ammonia as the source of nitrogen. Regulates intracellular CTP levels through interactions with the four ribonucleotide triphosphates. In Neisseria meningitidis serogroup B (strain ATCC BAA-335 / MC58), this protein is CTP synthase.